We begin with the raw amino-acid sequence, 145 residues long: MNKYEIMLIIDPAIDMAMANEIVESVFDKKNINKVVKLENSTLAYPINKSSKAQYVVYTLEAKSELIAEFTRRANIAKFIWRQMVINLDTEKGFQRSKKAFKHRIAKDAKVANKGTGVKQLIENLEKTMSHKAKPSFKKEVKKSN.

The protein belongs to the bacterial ribosomal protein bS6 family.

In terms of biological role, binds together with bS18 to 16S ribosomal RNA. This Mycoplasmopsis agalactiae (strain NCTC 10123 / CIP 59.7 / PG2) (Mycoplasma agalactiae) protein is Small ribosomal subunit protein bS6.